The following is a 379-amino-acid chain: LIM/homeobox protein Lhx9 (379 aa).

2 consecutive LIM zinc-binding domains span residues 51 to 112 and 113 to 175; these read TLCA…RFSV and QRCA…LVQG. Disordered regions lie at residues 232 to 257 and 310 to 379; these read ENDTDLDRDQSYPPSQKTKRMRTSFK and RQEN…TNLF. The segment covering 248 to 257 has biased composition (basic residues); it reads KTKRMRTSFK. The homeobox DNA-binding region spans 249–308; that stretch reads TKRMRTSFKHHQLRTTKSYFAINHNPDAKDLKQLAQKTGLTKRVLQVWFQNARAKFRRNL. The span at 326–379 shows a compositional bias: polar residues; it reads APASTDSAALTPTGAASTLSDLTSPSLNVGASVTPNMDSHESGSPSQTTLTNLF.

In terms of tissue distribution, isoform 1 and isoform 3 are expressed in ovary, testis, brain and heart. Isoform 4 and isoform 5 are expressed in brain.

It is found in the nucleus. Its function is as follows. May be involved in gonadal development. The polypeptide is LIM/homeobox protein Lhx9 (lhx9) (Glandirana rugosa (Japanese wrinkled frog)).